We begin with the raw amino-acid sequence, 237 residues long: Proteasome subunit beta 2 (237 aa).

Residues 1-14 (MNNWSQGSTPQGSD) are compositionally biased toward polar residues. Positions 1-42 (MNNWSQGSTPQGSDPSPYAPELGSLPDGSQSDDHGDTVNKTG) are cleaved as a propeptide — removed in mature form; by autocatalysis. The tract at residues 1–45 (MNNWSQGSTPQGSDPSPYAPELGSLPDGSQSDDHGDTVNKTGTTT) is disordered. The active-site Nucleophile is the T43.

It belongs to the peptidase T1B family. As to quaternary structure, the 20S proteasome core is composed of 14 alpha and 14 beta subunits that assemble into four stacked heptameric rings, resulting in a barrel-shaped structure. The two inner rings, each composed of seven catalytic beta subunits, are sandwiched by two outer rings, each composed of seven alpha subunits. The catalytic chamber with the active sites is on the inside of the barrel. Has a gated structure, the ends of the cylinder being occluded by the N-termini of the alpha-subunits. Is capped at one or both ends by the proteasome regulatory ATPase, PAN.

It is found in the cytoplasm. It catalyses the reaction Cleavage of peptide bonds with very broad specificity.. Its activity is regulated as follows. The formation of the proteasomal ATPase PAN-20S proteasome complex, via the docking of the C-termini of PAN into the intersubunit pockets in the alpha-rings, triggers opening of the gate for substrate entry. Interconversion between the open-gate and close-gate conformations leads to a dynamic regulation of the 20S proteasome proteolysis activity. Component of the proteasome core, a large protease complex with broad specificity involved in protein degradation. This chain is Proteasome subunit beta 2, found in Haloterrigena turkmenica (strain ATCC 51198 / DSM 5511 / JCM 9101 / NCIMB 13204 / VKM B-1734 / 4k) (Halococcus turkmenicus).